Reading from the N-terminus, the 433-residue chain is Xylose isomerase (433 aa).

Active-site residues include His-99 and Asp-102. Mg(2+)-binding residues include Glu-230, Glu-266, His-269, Asp-294, Asp-305, Asp-307, and Asp-337.

The protein belongs to the xylose isomerase family. Homotetramer. The cofactor is Mg(2+).

The protein resides in the cytoplasm. It carries out the reaction alpha-D-xylose = alpha-D-xylulofuranose. The sequence is that of Xylose isomerase from Cereibacter sphaeroides (strain ATCC 17029 / ATH 2.4.9) (Rhodobacter sphaeroides).